The sequence spans 440 residues: Chromosomal replication initiator protein DnaA (440 aa).

Residues Met-1–Asn-74 form a domain I, interacts with DnaA modulators region. Positions Asn-74 to Thr-99 are domain II. A domain III, AAA+ region region spans residues Ile-100 to Ala-316. ATP is bound by residues Gly-146, Gly-148, Lys-149, and Thr-150. A domain IV, binds dsDNA region spans residues Thr-317–Ser-440.

The protein belongs to the DnaA family. Oligomerizes as a right-handed, spiral filament on DNA at oriC.

It is found in the cytoplasm. In terms of biological role, plays an essential role in the initiation and regulation of chromosomal replication. ATP-DnaA binds to the origin of replication (oriC) to initiate formation of the DNA replication initiation complex once per cell cycle. Binds the DnaA box (a 9 base pair repeat at the origin) and separates the double-stranded (ds)DNA. Forms a right-handed helical filament on oriC DNA; dsDNA binds to the exterior of the filament while single-stranded (ss)DNA is stabiized in the filament's interior. The ATP-DnaA-oriC complex binds and stabilizes one strand of the AT-rich DNA unwinding element (DUE), permitting loading of DNA polymerase. After initiation quickly degrades to an ADP-DnaA complex that is not apt for DNA replication. Binds acidic phospholipids. The sequence is that of Chromosomal replication initiator protein DnaA from Campylobacter jejuni subsp. doylei (strain ATCC BAA-1458 / RM4099 / 269.97).